The sequence spans 90 residues: Small ribosomal subunit protein uS15c (90 aa).

It belongs to the universal ribosomal protein uS15 family. Part of the 30S ribosomal subunit.

Its subcellular location is the plastid. It is found in the chloroplast. In Populus alba (White poplar), this protein is Small ribosomal subunit protein uS15c (rps15).